A 312-amino-acid polypeptide reads, in one-letter code: Glyoxylate/hydroxypyruvate reductase A (312 aa).

The active site involves R227. H275 functions as the Proton donor in the catalytic mechanism.

The protein belongs to the D-isomer specific 2-hydroxyacid dehydrogenase family. GhrA subfamily.

The protein resides in the cytoplasm. It carries out the reaction glycolate + NADP(+) = glyoxylate + NADPH + H(+). The catalysed reaction is (R)-glycerate + NAD(+) = 3-hydroxypyruvate + NADH + H(+). It catalyses the reaction (R)-glycerate + NADP(+) = 3-hydroxypyruvate + NADPH + H(+). Its function is as follows. Catalyzes the NADPH-dependent reduction of glyoxylate and hydroxypyruvate into glycolate and glycerate, respectively. In Escherichia coli O7:K1 (strain IAI39 / ExPEC), this protein is Glyoxylate/hydroxypyruvate reductase A.